The chain runs to 98 residues: Large ribosomal subunit protein bL21 (98 aa).

It belongs to the bacterial ribosomal protein bL21 family. In terms of assembly, part of the 50S ribosomal subunit. Contacts protein L20.

In terms of biological role, this protein binds to 23S rRNA in the presence of protein L20. In Novosphingobium aromaticivorans (strain ATCC 700278 / DSM 12444 / CCUG 56034 / CIP 105152 / NBRC 16084 / F199), this protein is Large ribosomal subunit protein bL21.